A 287-amino-acid polypeptide reads, in one-letter code: Cyclopropane mycolic acid synthase MmaA2 (287 aa).

Residues 33-34 (YS), 72-74 (GCG), 94-99 (TLSKNQ), 123-124 (WE), and Ile-136 contribute to the S-adenosyl-L-methionine site. Cys-269 is an active-site residue.

It belongs to the CFA/CMAS family.

It carries out the reaction a 1-acyl-2-(9Z)-enoyl-sn-glycero-3-phospholipid + S-adenosyl-L-methionine = a 1-acyl-2-(9-cyclopronane)-acyl-sn-glycero-3-phospholipid + S-adenosyl-L-homocysteine + H(+). It functions in the pathway lipid metabolism; mycolic acid biosynthesis. Functionally, catalyzes the conversion of a double bond to a cis cyclopropane ring at the distal position of an alpha mycolic acid via the transfer of a methylene group from S-adenosyl-L-methionine. MmaA2 also catalyzes the biosynthesis of the cis-cyclopropanated methoxymycolates. Cyclopropanated mycolic acids are key factors participating in cell envelope permeability, host immunomodulation and persistence. In Mycobacterium bovis (strain ATCC BAA-935 / AF2122/97), this protein is Cyclopropane mycolic acid synthase MmaA2 (cmaC).